Here is a 417-residue protein sequence, read N- to C-terminus: Serine hydroxymethyltransferase 2 (417 aa).

(6S)-5,6,7,8-tetrahydrofolate contacts are provided by residues leucine 121 and 125-127; that span reads GHL. Lysine 230 carries the N6-(pyridoxal phosphate)lysine modification. 355 to 357 is a binding site for (6S)-5,6,7,8-tetrahydrofolate; that stretch reads SPF.

This sequence belongs to the SHMT family. In terms of assembly, homodimer. Pyridoxal 5'-phosphate serves as cofactor.

It is found in the cytoplasm. The enzyme catalyses (6R)-5,10-methylene-5,6,7,8-tetrahydrofolate + glycine + H2O = (6S)-5,6,7,8-tetrahydrofolate + L-serine. The protein operates within one-carbon metabolism; tetrahydrofolate interconversion. Its pathway is amino-acid biosynthesis; glycine biosynthesis; glycine from L-serine: step 1/1. In terms of biological role, catalyzes the reversible interconversion of serine and glycine with tetrahydrofolate (THF) serving as the one-carbon carrier. This reaction serves as the major source of one-carbon groups required for the biosynthesis of purines, thymidylate, methionine, and other important biomolecules. Also exhibits THF-independent aldolase activity toward beta-hydroxyamino acids, producing glycine and aldehydes, via a retro-aldol mechanism. The sequence is that of Serine hydroxymethyltransferase 2 from Pseudomonas savastanoi pv. phaseolicola (strain 1448A / Race 6) (Pseudomonas syringae pv. phaseolicola (strain 1448A / Race 6)).